A 1135-amino-acid chain; its full sequence is Envelopment polyprotein (1135 aa).

Residues 1 to 18 (MGIWKWLVMASLVWPVLT) form the signal peptide. Residues 19-485 (LRNVYDMKIE…VPGFHGWATA (467 aa)) lie on the Lumenal side of the membrane. 11 disulfide bridges follow: Cys-29/Cys-151, Cys-63/Cys-157, Cys-109/Cys-128, Cys-133/Cys-138, Cys-175/Cys-185, Cys-210/Cys-247, Cys-234/Cys-351, Cys-376/Cys-435, Cys-380/Cys-389, Cys-405/Cys-424, and Cys-452/Cys-475. N-linked (GlcNAc...) asparagine; by host glycosylation occurs at Asn-134. 2 N-linked (GlcNAc...) asparagine; by host glycosylation sites follow: Asn-235 and Asn-347. The N-linked (GlcNAc...) asparagine; by host glycan is linked to Asn-399. The helical transmembrane segment at 486-506 (ALLVTFCFGWVLIPAITFIIL) threads the bilayer. At 507–627 (TVLKFIANIF…LNLFRYKSRC (121 aa)) the chain is on the cytoplasmic side. The binding to the ribonucleoprotein stretch occupies residues 516–533 (FHTSNQENRLKSVLRKIK). 2 consecutive CCHC-type zinc fingers follow at residues 545-565 (CDVCKYECETYKELKAHGVSC) and 570-591 (CPYCFTHCEPTEAAFQAHYKVC). 3 binding to the ribonucleoprotein regions span residues 588 to 605 (YKVCQVTHRFRDDLKKTV), 592 to 603 (QVTHRFRDDLKK), and 611 to 625 (TPGCYRTLNLFRYKS). The ITAM domain occupies 611–634 (TPGCYRTLNLFRYKSRCYIFTMWI). A YxxL motif is present at residues 615-618 (YRTL). Residues 628–648 (YIFTMWIFLLVLESILWAASA) form a helical membrane-spanning segment. Over 649-1105 (SETPLTPVWN…EWISGIFSGN (457 aa)) the chain is Lumenal. 8 cysteine pairs are disulfide-bonded: Cys-735/Cys-770, Cys-739/Cys-777, Cys-751/Cys-885, Cys-765/Cys-896, Cys-780/Cys-904, Cys-806/Cys-815, Cys-823/Cys-832, and Cys-863/Cys-867. Positions 757-777 (YQYETSWGCNPSDCPGVGTGC) are fusion loop. N-linked (GlcNAc...) asparagine; by host glycosylation occurs at Asn-928. Disulfide bonds link Cys-970-Cys-1000, Cys-993-Cys-1045, Cys-1010-Cys-1015, Cys-1046-Cys-1051, and Cys-1085-Cys-1089. The chain crosses the membrane as a helical span at residues 1106–1126 (WIVLIVLCVFLLFSLVLLSIL). A binding to the ribonucleoprotein region spans residues 1122 to 1135 (LLSILCPVRKHKKS). The Cytoplasmic segment spans residues 1127 to 1135 (CPVRKHKKS).

This sequence belongs to the hantavirus envelope glycoprotein family. Homodimer. Homotetramer; forms heterotetrameric Gn-Gc spikes in the pre-fusion conformation. Interacts (via C-terminus) with the nucleoprotein. Interacts with host TUFM; this interaction contributes to the virus-induced degradation of mitochondria by autophagy, which leads to degradation of host MAVS and inhibition of type I interferon (IFN) responses. Interacts with host MAP1LC3B; this interaction contributes to the virus-induced degradation of mitochondria by autophagy, which leads to degradation of host MAVS and inhibition of type I interferon (IFN) responses. As to quaternary structure, homotetramer; forms heterotetrameric Gn-Gc spikes in the pre-fusion conformation. Homotrimer; forms homotrimer in the post-fusion conformation at acidic pH. Interacts (via C-terminus) with the nucleoprotein. Specific enzymatic cleavage in vivo yield the mature proteins Glycoprotein N and Glycoprotein C.

It localises to the virion membrane. Its subcellular location is the host cell surface. The protein resides in the host Golgi apparatus membrane. It is found in the host endoplasmic reticulum membrane. The protein localises to the host mitochondrion. Functionally, forms homotetramers with glycoprotein C at the surface of the virion. Attaches the virion to host cell receptors including integrin ITGAV/ITGB3. This attachment induces virion internalization predominantly through clathrin-dependent endocytosis. May also bind to host C1QBP for virus entry into the host cell. Mediates the assembly and budding of infectious virus particles through its interaction with the nucleocapsid protein and the viral genome. May dysregulate normal immune and endothelial cell responses through an ITAM motif. Translocates to mitochondria, binds to host TUFM and recruits MAP1LC3B. These interactions induce mitochondrial autophagy and therefore destruction of host MAVS leading to inhibition of type I interferon (IFN) responses. Concomitant breakdown of glycoprotein N is apparently prevented by the nucleoprotein that may inhibit Gn-stimulated autophagosome-lysosome fusion. Interacts with the viral genomic RNA. In terms of biological role, homodimer. Homotetramer; forms heterotetrameric Gn-Gc spikes in the pre-fusion conformation. Attaches the virion to host cell receptors including integrin ITGAV/ITGB3. This attachment induces virion internalization predominantly through clathrin-dependent endocytosis. May also bind to host C1QBP for virus entry into the host cell. Class II fusion protein that promotes fusion of viral membrane with host endosomal membrane after endocytosis of the virion. The sequence is that of Envelopment polyprotein (GP) from Apodemus agrarius (Eurasian field mouse).